The primary structure comprises 120 residues: NAD(P)H-quinone oxidoreductase subunit 3 (120 aa).

Transmembrane regions (helical) follow at residues Phe10–Ile30, Met64–Val84, and Leu89–Ala109.

Belongs to the complex I subunit 3 family. As to quaternary structure, NDH-1 can be composed of about 15 different subunits; different subcomplexes with different compositions have been identified which probably have different functions.

The protein resides in the cellular thylakoid membrane. It carries out the reaction a plastoquinone + NADH + (n+1) H(+)(in) = a plastoquinol + NAD(+) + n H(+)(out). It catalyses the reaction a plastoquinone + NADPH + (n+1) H(+)(in) = a plastoquinol + NADP(+) + n H(+)(out). In terms of biological role, NDH-1 shuttles electrons from an unknown electron donor, via FMN and iron-sulfur (Fe-S) centers, to quinones in the respiratory and/or the photosynthetic chain. The immediate electron acceptor for the enzyme in this species is believed to be plastoquinone. Couples the redox reaction to proton translocation, and thus conserves the redox energy in a proton gradient. Cyanobacterial NDH-1 also plays a role in inorganic carbon-concentration. This Prochlorococcus marinus (strain MIT 9312) protein is NAD(P)H-quinone oxidoreductase subunit 3.